The sequence spans 466 residues: Phosphoenolpyruvate carboxykinase (ATP) (466 aa).

Substrate is bound by residues Arg-61, Tyr-196, and Lys-202. ATP-binding positions include Lys-202, His-221, and 237 to 245 (GLSGTGKTT). Lys-202 and His-221 together coordinate Mn(2+). A Mn(2+)-binding site is contributed by Asp-258. Residues Glu-286, Arg-323, and Thr-448 each coordinate ATP. Arg-323 is a substrate binding site.

The protein belongs to the phosphoenolpyruvate carboxykinase (ATP) family. It depends on Mn(2+) as a cofactor.

It localises to the cytoplasm. It catalyses the reaction oxaloacetate + ATP = phosphoenolpyruvate + ADP + CO2. It participates in carbohydrate biosynthesis; gluconeogenesis. Functionally, involved in the gluconeogenesis. Catalyzes the conversion of oxaloacetate (OAA) to phosphoenolpyruvate (PEP) through direct phosphoryl transfer between the nucleoside triphosphate and OAA. The sequence is that of Phosphoenolpyruvate carboxykinase (ATP) from Deinococcus radiodurans (strain ATCC 13939 / DSM 20539 / JCM 16871 / CCUG 27074 / LMG 4051 / NBRC 15346 / NCIMB 9279 / VKM B-1422 / R1).